The chain runs to 303 residues: Formylglycine-generating enzyme (303 aa).

Asparagine 188, isoleucine 189, aspartate 202, tyrosine 204, asparagine 222, valine 223, glycine 225, and valine 227 together coordinate Ca(2+). Cysteine 269 and cysteine 274 together coordinate Cu(+).

The protein belongs to the sulfatase-modifying factor family. Cu(+) serves as cofactor.

The catalysed reaction is L-cysteinyl-[sulfatase] + 2 a thiol + O2 = an organic disulfide + 3-oxo-L-alanyl-[sulfatase] + hydrogen sulfide + H2O + H(+). The protein operates within protein modification; sulfatase oxidation. Oxidase that catalyzes the conversion of cysteine to 3-oxoalanine on target proteins. 3-oxoalanine modification, which is also named formylglycine (fGly), occurs in the maturation of arylsulfatases and some alkaline phosphatases that use the hydrated form of 3-oxoalanine as a catalytic nucleophile. In Thermomonospora curvata (strain ATCC 19995 / DSM 43183 / JCM 3096 / KCTC 9072 / NBRC 15933 / NCIMB 10081 / Henssen B9), this protein is Formylglycine-generating enzyme.